The following is a 199-amino-acid chain: 7-methyl-GTP pyrophosphatase (199 aa).

D74 (proton acceptor) is an active-site residue.

This sequence belongs to the Maf family. YceF subfamily. A divalent metal cation serves as cofactor.

It is found in the cytoplasm. The catalysed reaction is N(7)-methyl-GTP + H2O = N(7)-methyl-GMP + diphosphate + H(+). Nucleoside triphosphate pyrophosphatase that hydrolyzes 7-methyl-GTP (m(7)GTP). May have a dual role in cell division arrest and in preventing the incorporation of modified nucleotides into cellular nucleic acids. The protein is 7-methyl-GTP pyrophosphatase of Cupriavidus metallidurans (strain ATCC 43123 / DSM 2839 / NBRC 102507 / CH34) (Ralstonia metallidurans).